A 217-amino-acid chain; its full sequence is Thiamine-phosphate synthase (217 aa).

Residues 42–46 and D77 contribute to the 4-amino-2-methyl-5-(diphosphooxymethyl)pyrimidine site; that span reads QYRDK. The Mg(2+) site is built by D78 and D97. S116 contributes to the 4-amino-2-methyl-5-(diphosphooxymethyl)pyrimidine binding site. 143–145 is a binding site for 2-[(2R,5Z)-2-carboxy-4-methylthiazol-5(2H)-ylidene]ethyl phosphate; the sequence is TTS. 4-amino-2-methyl-5-(diphosphooxymethyl)pyrimidine is bound at residue K146. 2-[(2R,5Z)-2-carboxy-4-methylthiazol-5(2H)-ylidene]ethyl phosphate-binding positions include G174 and 194–195; that span reads IS.

This sequence belongs to the thiamine-phosphate synthase family. Requires Mg(2+) as cofactor.

It carries out the reaction 2-[(2R,5Z)-2-carboxy-4-methylthiazol-5(2H)-ylidene]ethyl phosphate + 4-amino-2-methyl-5-(diphosphooxymethyl)pyrimidine + 2 H(+) = thiamine phosphate + CO2 + diphosphate. The catalysed reaction is 2-(2-carboxy-4-methylthiazol-5-yl)ethyl phosphate + 4-amino-2-methyl-5-(diphosphooxymethyl)pyrimidine + 2 H(+) = thiamine phosphate + CO2 + diphosphate. It catalyses the reaction 4-methyl-5-(2-phosphooxyethyl)-thiazole + 4-amino-2-methyl-5-(diphosphooxymethyl)pyrimidine + H(+) = thiamine phosphate + diphosphate. It participates in cofactor biosynthesis; thiamine diphosphate biosynthesis; thiamine phosphate from 4-amino-2-methyl-5-diphosphomethylpyrimidine and 4-methyl-5-(2-phosphoethyl)-thiazole: step 1/1. Functionally, condenses 4-methyl-5-(beta-hydroxyethyl)thiazole monophosphate (THZ-P) and 2-methyl-4-amino-5-hydroxymethyl pyrimidine pyrophosphate (HMP-PP) to form thiamine monophosphate (TMP). This Lactiplantibacillus plantarum (strain ATCC BAA-793 / NCIMB 8826 / WCFS1) (Lactobacillus plantarum) protein is Thiamine-phosphate synthase.